Reading from the N-terminus, the 358-residue chain is DnaJ homolog subfamily B member 11 (358 aa).

Positions 1-22 (MAPQNLSTFCLLLLYLIGTVIA) are cleaved as a signal peptide. One can recognise a J domain in the interval 25–90 (DFYKILGVPR…EKRKQYDTYG (66 aa)). Position 188 is a phosphothreonine (T188). N-linked (GlcNAc...) asparagine glycosylation is present at N261.

Part of a large chaperone multiprotein complex comprising DNAJB11, HSP90B1, HSPA5, HYOU, PDIA2, PDIA4, PDIA6, PPIB, SDF2L1, UGGT1 and very small amounts of ERP29, but not, or at very low levels, CALR nor CANX. Binds to denatured substrates in an ATP-independent manner. Interacts via the J domain with HSPA5 in an ATP-dependent manner. Contains high-mannose Endo H-sensitive carbohydrates. In terms of processing, cys-169, Cys-171, Cys-193 and Cys-196 form intramolecular disulfide bonds. The preferential partner for each Cys is not known.

Its subcellular location is the endoplasmic reticulum lumen. As a co-chaperone for HSPA5 it is required for proper folding, trafficking or degradation of proteins. Binds directly to both unfolded proteins that are substrates for ERAD and nascent unfolded peptide chains, but dissociates from the HSPA5-unfolded protein complex before folding is completed. May help recruiting HSPA5 and other chaperones to the substrate. Stimulates HSPA5 ATPase activity. It is necessary for maturation and correct trafficking of PKD1. The sequence is that of DnaJ homolog subfamily B member 11 (Dnajb11) from Mus musculus (Mouse).